A 483-amino-acid chain; its full sequence is SET domain and MYND-type zinc finger protein 6 (483 aa).

Residues Pro-4–Ile-228 enclose the SET domain. Zn(2+) contacts are provided by Cys-49, Cys-52, Cys-62, Cys-65, Cys-71, Cys-75, His-83, and Cys-87. The MYND-type zinc-finger motif lies at Cys-49–Cys-87.

This sequence belongs to the class V-like SAM-binding methyltransferase superfamily.

Its subcellular location is the cytoplasm. It is found in the nucleus. The chain is SET domain and MYND-type zinc finger protein 6 (set6) from Schizosaccharomyces pombe (strain 972 / ATCC 24843) (Fission yeast).